The sequence spans 307 residues: Thiohydrolase apmlB (307 aa).

The protein belongs to the polyketide transferase af380 family.

In terms of biological role, thiohydrolase; part of the gene cluster that mediates the biosynthesis of phaeospelide A, a fungal polyene macrolide with a 34-membered macrolactone ring and an all-trans conjugated hexaene structure. The HR-PKS ApmlA uses acetyl-CoA and malonyl-CoA as its starter and extender units, respectively, and provides the large carbon framework in phaeospelide via 16 cycles of polyketide chain elongation, which is the largest number identified in fungal iterative PKSs thus far. During round 1, the KR domain reduces beta -ketone to an L-oriented hydroxy group, while during later rounds, it provides hydroxy groups in the D-configuration. The characteristic conjugated hexaene moiety is built during the later rounds (10-15), when the KR and DH domains are at work but ER is off. Phylogenetic analysis of the DH domain suggests that a polyene formation is programmed in the DH domain. Finally, the mature ACP-tethered carbon chain is transferred to the serine residue of the thiohydrolase apmlB, followed by intramolecular macrolactonization, generating phaeospelide A. When one elongation cycle during rounds 7-9 is skipped, phaeospelide B is biosynthesized instead. The chain is Thiohydrolase apmlB from Arthrinium phaeospermum (Gymnosporium phaeospermum).